The primary structure comprises 1149 residues: ATP-dependent helicase/deoxyribonuclease subunit B (1149 aa).

8–15 (GRAGSGKS) is a binding site for ATP. Cys788, Cys1106, Cys1109, and Cys1115 together coordinate [4Fe-4S] cluster.

The protein belongs to the helicase family. AddB/RexB type 1 subfamily. Heterodimer of AddA and AddB. It depends on Mg(2+) as a cofactor. [4Fe-4S] cluster serves as cofactor.

In terms of biological role, the heterodimer acts as both an ATP-dependent DNA helicase and an ATP-dependent, dual-direction single-stranded exonuclease. Recognizes the chi site generating a DNA molecule suitable for the initiation of homologous recombination. The AddB subunit has 5' -&gt; 3' nuclease activity but not helicase activity. This chain is ATP-dependent helicase/deoxyribonuclease subunit B, found in Ruminiclostridium cellulolyticum (strain ATCC 35319 / DSM 5812 / JCM 6584 / H10) (Clostridium cellulolyticum).